A 140-amino-acid polypeptide reads, in one-letter code: Large ribosomal subunit protein uL14 (140 aa).

Belongs to the universal ribosomal protein uL14 family. Part of the 50S ribosomal subunit. Forms a cluster with proteins L3 and L24e, part of which may contact the 16S rRNA in 2 intersubunit bridges.

Its function is as follows. Binds to 23S rRNA. Forms part of two intersubunit bridges in the 70S ribosome. This is Large ribosomal subunit protein uL14 from Nitrosopumilus maritimus (strain SCM1).